Here is an 86-residue protein sequence, read N- to C-terminus: Large ribosomal subunit protein bL31B (86 aa).

The protein belongs to the bacterial ribosomal protein bL31 family. Type B subfamily. As to quaternary structure, part of the 50S ribosomal subunit.

The protein is Large ribosomal subunit protein bL31B of Cupriavidus taiwanensis (strain DSM 17343 / BCRC 17206 / CCUG 44338 / CIP 107171 / LMG 19424 / R1) (Ralstonia taiwanensis (strain LMG 19424)).